Here is a 245-residue protein sequence, read N- to C-terminus: Brasilane terpene glycosides biosynthesis cluster protein D (245 aa).

2 consecutive C3H1-type zinc fingers follow at residues 121–152 (KELK…HDNV) and 161–185 (ICHF…HYPA). The tract at residues 186-245 (PHRVTAPMPSKKKSKKLRSSVADDASHPDLGKARRHDPRDDEQNDEVWRNQGRARPGQEW) is disordered. Over residues 209–226 (DASHPDLGKARRHDPRDD) the composition is skewed to basic and acidic residues.

Functionally, part of the gene cluster that mediates the biosynthesis of the brasilane terpene glycosides brasilane D and E. The biosynthesis starts with the activity of the terpene cyclase braA that converts farnesyl pyrophosphate into the sesquiterpene alcohol trichobrasilenol. Subsequently, trichobrasilenol is glycosylated by the O-glycosyltransferase braB putatively using UDP-GlcNAc as sugar donor to yield brasilane A. The latter then undergoes two rounds of oxidation performed by the cytochrome P450 monooxygenase braC. In the first round braC hydroxylates C-12 forming brasilane D, which serves as substrate in the second round to establish the epoxide at the bond between C-5 and C-10 and oxidize the alcohol at C-12 to an aldehyde leading to the final product brasilane E. This chain is Brasilane terpene glycosides biosynthesis cluster protein D, found in Annulohypoxylon truncatum (Hypoxylon truncatum).